The primary structure comprises 360 residues: Peptide chain release factor 1 (360 aa).

An N5-methylglutamine modification is found at Q235. A disordered region spans residues 285-314; that stretch reads KRQQAEASTRRNLLGSGDRSDRNRTYNFPQ.

Belongs to the prokaryotic/mitochondrial release factor family. Methylated by PrmC. Methylation increases the termination efficiency of RF1.

The protein resides in the cytoplasm. Peptide chain release factor 1 directs the termination of translation in response to the peptide chain termination codons UAG and UAA. This is Peptide chain release factor 1 from Klebsiella pneumoniae subsp. pneumoniae (strain ATCC 700721 / MGH 78578).